The primary structure comprises 471 residues: DnaJ protein P58IPK homolog B (471 aa).

Residues 1-24 (MARWPWRWRVLLPLLLLHSSPVFA) form the signal peptide. 8 TPR repeats span residues 32–65 (PSTL…DPNH), 66–99 (SEAY…KPGS), 112–146 (AQNA…SPNC), 148–180 (KAKL…DEDN), 181–214 (LDAL…DPEH), 227–260 (LLKK…DPDH), 265–298 (VHLY…DGEL), and 300–332 (DALT…SPQD). The N-linked (GlcNAc...) asparagine glycan is linked to N64. The 67-residue stretch at 353-419 (DWYKILGISK…DKRVRYDRGE (67 aa)) folds into the J domain.

In terms of assembly, interacts with BIP1.

The protein localises to the endoplasmic reticulum lumen. May play a role in protein folding in the endoplasmic reticulum. The chain is DnaJ protein P58IPK homolog B from Oryza sativa subsp. japonica (Rice).